We begin with the raw amino-acid sequence, 293 residues long: Ribosomal protein L11 methyltransferase (293 aa).

Residues Thr145, Gly166, Asp188, and Asn230 each coordinate S-adenosyl-L-methionine.

It belongs to the methyltransferase superfamily. PrmA family.

Its subcellular location is the cytoplasm. The catalysed reaction is L-lysyl-[protein] + 3 S-adenosyl-L-methionine = N(6),N(6),N(6)-trimethyl-L-lysyl-[protein] + 3 S-adenosyl-L-homocysteine + 3 H(+). Its function is as follows. Methylates ribosomal protein L11. This Haemophilus ducreyi (strain 35000HP / ATCC 700724) protein is Ribosomal protein L11 methyltransferase.